We begin with the raw amino-acid sequence, 478 residues long: MAEEYAECLLEKNFHEDCSGCKVDQMKRLRRGFPFWELFTVWIIVLCTALPISSLFPFLYFMIDDFNIAKKEEDIGFYAGFVGCSFMLGRAFTSVAWGLVADRYGRKPVILIGTASVVVFNTLFGLSLNFWMAIITRFCLGSFNGLLGPIKAYAMEIFRDEYQGLALSAVSTAWGIGLIIGPAIGGFLAQPAKQYPSLFSQDSIFGKFPFFLPCLAISVFAFLVTIVSSRIPETLHNHKFNDDESYDALKDLSDDPESNKVAERNGKSSLLNNWPLISSIIVYCVFSLHDMAYTEIFSLWANSPRKYGGLGYSTADVGSVLAFSGFGLLIFQLSLYSYAERLLGPIIVTRISGSLAMVVLSCYPLIAKLSGLALTVTVTSASVAKSVLGTSAITGLFILQNKAVRQDQRGAANGIAMTAMSLFKAIGPAAAGIIFSWSEKRQGAAFLPGTQMVFFILNVVLALGVVLTFKPFLAETQQ.

A run of 12 helical transmembrane segments spans residues 43–63, 81–101, 108–128, 130–150, 169–189, 208–228, 280–300, 317–337, 346–367, 378–398, 415–435, and 453–473; these read IIVL…YFMI, FVGC…GLVA, PVIL…GLSL, FWMA…LGPI, AVST…GFLA, FPFF…TIVS, IIVY…FSLW, VGSV…SLYS, IIVT…PLIA, VTSA…GLFI, IAMT…GIIF, and VFFI…KPFL.

The protein belongs to the major facilitator superfamily. Predominantly expressed in roots and stomatal guard cells. Detected in anther stamen filaments and shoot apical meristem. In the mature portion of roots, restricted to the cortex. At the root tip, highly expressed in both the cortical and epidermal cell layers of the apical meristem and the transition zone, while absent from the quiescent center or the columella cells. Not detected in lateral root primordia.

It localises to the cell membrane. The protein localises to the vacuole membrane. Major facilitator superfamily (MFS) transporter probably involved in 2,4-dichlorophenoxyacetic acid (2,4-D) export. K(+) may be the physiological substrate of the transporter. Functionally, modulates root auxin-related processes. Involved in auxin efflux and acts as a positive regulator of shootward transport at the root apex. May mediate proton efflux from the vacuolar compartment. Its function is as follows. Mediates drought stress tolerance by regulating stomatal closure. The polypeptide is Protein ZINC INDUCED FACILITATOR-LIKE 1 (ZIFL1) (Arabidopsis thaliana (Mouse-ear cress)).